Reading from the N-terminus, the 274-residue chain is Large ribosomal subunit protein uL2cz/uL2cy (274 aa).

2 disordered regions span residues Met1–Gln21 and Pro225–Lys274.

The protein belongs to the universal ribosomal protein uL2 family. In terms of assembly, part of the 50S ribosomal subunit.

The protein resides in the plastid. It is found in the chloroplast. This Arabidopsis thaliana (Mouse-ear cress) protein is Large ribosomal subunit protein uL2cz/uL2cy (rpl2-A).